The chain runs to 418 residues: F-box/kelch-repeat protein SKIP20 (418 aa).

The 48-residue stretch at 14 to 61 folds into the F-box domain; sequence DLIPGLPEELAIECLVRVPFQFHSSIKSVCRSWKCVISSRSFIKERIG. The tract at residues 79–104 is disordered; that stretch reads PSPAMMEGGEMSQKKKEEEEGESQMT. Kelch repeat units lie at residues 104–150, 153–206, 208–255, and 258–314; these read TQQL…AIQD, KVLL…SVGS, KVYV…SMAT, and GFCV…EFPG.

In terms of assembly, part of a SCF (ASK-cullin-F-box) protein ligase complex. Interacts with SKP1A/ASK1 and SPK1B/ASK2.

Its subcellular location is the nucleus. Its pathway is protein modification; protein ubiquitination. In terms of biological role, component of SCF(ASK-cullin-F-box) E3 ubiquitin ligase complexes, which may mediate the ubiquitination and subsequent proteasomal degradation of target proteins. This is F-box/kelch-repeat protein SKIP20 (SKIP20) from Arabidopsis thaliana (Mouse-ear cress).